Consider the following 167-residue polypeptide: Secreted LysM effector Blys6 (167 aa).

Positions 1–16 are cleaved as a signal peptide; the sequence is MKGLCVAACTLVLAAA. Positions 109-162 constitute a LysM domain; it reads KWYRIRRGDDCGPVASEFGISADQLIEWNPWLSADVDGTHYPCMNIWPTDNLCV.

Belongs to the secreted LysM effector family.

Might have a role in sequestration of chitin oligosaccharides (breakdown products of fungal cell walls that are released during invasion and act as triggers of host immunity) to dampen host defense. The sequence is that of Secreted LysM effector Blys6 from Beauveria bassiana (strain ARSEF 2860) (White muscardine disease fungus).